Reading from the N-terminus, the 722-residue chain is MDFISENTISDKTTLEELKNATLFQVTKVDDRDCLRARRICNAPKGHWAGLMEKAKAMGDPTEEEKDELKKIVESYNTVSVLGVSKSEGATGPRLVSSLKGLKNLLPGVNPKTLQETLLVGAPCPSTEPTTEEYWNVCRAAVGASMGSAKINMSQKVVMGASVIGWGQLNQSGPGVYFLNTKEIVTAEGKVDETRGPLERTSAPLMRDISRLIQETIEEVETGGDPSFSVRSEGGSKIEGRIAFSLHSEVSTLKMRIALEQKLAKYEYMGENLLTLVKNTSIDRMQPDSAMMGKMVLESLRTHTVSSEQLNGRMITVQSQGLETIAISSPFDVEYDDGYVFTRMKGNFVAVGRDYKGAILCFREGQGTFFSGRGNWSGLMEKCLVEMRLCPCFYSCTWQDYPDKKSLYEKATFEAKQIVFAMGENTGVDIRVNTDGEIGDKGISLLTREREDKYMSKVSYECRVVSGKLVMGLDKMSRVAKGNLEVVREKGDDTSQSDSFYEGVLQVGSMIGTTMESLKQQLQGPVGIWRASGVSAMERCMKRGQSKTVVASARYTFQKMMEKMATGREVSKYSLIIVMRCCIGFTSEANKRALTNISGTGYYISVAQPTVVKLAGEWLITPVGRSKTGEVQYVSAKLKKGMTTGKLELIKKADRSDLDNFPEPSADELLREGTIVLMQIGKDKWLCRVRTGDRRVRTDTDIQRAEAKSQVEKEDLMDEYGV.

As to quaternary structure, the RNA polymerase is composed of three subunits: PB1, PB2 and PA.

The protein resides in the virion. The protein localises to the host nucleus. Involved in transcription initiation and cap-stealing mechanism, in which cellular capped pre-mRNA are used to generate primers for viral transcription. Binds the cap of the target pre-RNA which is subsequently cleaved by PB1. May play a role in genome replication. In Gadus morhua (Atlantic cod), this protein is Polymerase basic protein 2.